The following is a 65-amino-acid chain: Keratin-associated protein 23-1 (65 aa).

Interacts with hair keratins.

In the hair cortex, hair keratin intermediate filaments are embedded in an interfilamentous matrix, consisting of hair keratin-associated proteins (KRTAP), which are essential for the formation of a rigid and resistant hair shaft through their extensive disulfide bond cross-linking with abundant cysteine residues of hair keratins. The matrix proteins include the high-sulfur and high-glycine-tyrosine keratins. The chain is Keratin-associated protein 23-1 (KRTAP23-1) from Homo sapiens (Human).